A 105-amino-acid chain; its full sequence is Heat shock protein HspQ (105 aa).

The interval 76–105 (EMRDEHPEQPSMDELARTIRKQLQAPRLRN) is disordered.

This sequence belongs to the HspQ family.

The protein localises to the cytoplasm. Involved in the degradation of certain denaturated proteins, including DnaA, during heat shock stress. This is Heat shock protein HspQ from Salmonella agona (strain SL483).